Reading from the N-terminus, the 55-residue chain is uncharacterized protein (55 aa).

The helical transmembrane segment at 27 to 47 threads the bilayer; sequence IFLIYHFSPIYCPYLFLFTVF.

It localises to the membrane. This is an uncharacterized protein from Acheta domesticus (House cricket).